A 406-amino-acid chain; its full sequence is Imidazolonepropionase (406 aa).

Residues H72 and H74 each contribute to the Fe(3+) site. Residues H72 and H74 each coordinate Zn(2+). 4-imidazolone-5-propanoate is bound by residues R81, Y144, and H177. Y144 is an N-formimidoyl-L-glutamate binding site. H242 serves as a coordination point for Fe(3+). Residue H242 coordinates Zn(2+). Q245 is a binding site for 4-imidazolone-5-propanoate. D317 serves as a coordination point for Fe(3+). D317 contacts Zn(2+). N-formimidoyl-L-glutamate is bound by residues N319 and G321. Position 322 (T322) interacts with 4-imidazolone-5-propanoate.

Belongs to the metallo-dependent hydrolases superfamily. HutI family. Requires Zn(2+) as cofactor. Fe(3+) is required as a cofactor.

The protein localises to the cytoplasm. The enzyme catalyses 4-imidazolone-5-propanoate + H2O = N-formimidoyl-L-glutamate. The protein operates within amino-acid degradation; L-histidine degradation into L-glutamate; N-formimidoyl-L-glutamate from L-histidine: step 3/3. In terms of biological role, catalyzes the hydrolytic cleavage of the carbon-nitrogen bond in imidazolone-5-propanoate to yield N-formimidoyl-L-glutamate. It is the third step in the universal histidine degradation pathway. This Yersinia enterocolitica serotype O:8 / biotype 1B (strain NCTC 13174 / 8081) protein is Imidazolonepropionase.